The primary structure comprises 330 residues: MVQSQSLSTLTICGSVKVSSLLRNRLNSVKASSLIGDRCVSCQFLRKSPSFRSHWKSLKQRNLLRVEARWPFQGGGEQGLDPSSERSESANEDILIFFFQLDLATRVQYAMNLEQYDIAQQLREKLTEVEEESIRLQEGKRGSSAKSEAQDKGISIIRLRADLQNAIDSEDYGLAAKLRDEISKLEAESLAVSAKALAFEKAEYAFRLGQKLRHKTFGYRAVVCGMDPICSESSSWMEAAEVEKLPRGSNQPFYQVLVDVRTHPDLLVAYVAEDNLLAPEKPDKERFDHPYISFLYYGADTAGDFIPVKQLREKYNRPRHEVPFDSQDED.

A chloroplast-targeting transit peptide spans 1-65 (MVQSQSLSTL…KSLKQRNLLR (65 aa)). The NTD, required for CLPS1-binding stretch occupies residues 66–138 (VEARWPFQGG…VEEESIRLQE (73 aa)). 2 coiled-coil regions span residues 112–139 (NLEQ…LQEG) and 175–195 (AAKL…VSAK). The region spanning 153–188 (GISIIRLRADLQNAIDSEDYGLAAKLRDEISKLEAE) is the UVR domain. The interval 203-310 (EYAFRLGQKL…TAGDFIPVKQ (108 aa)) is yccV-like.

As to quaternary structure, binds to CLPC1 and CLPC2. Interacts with ClpS1; this interaction stimulates their association with ClpC. Associates with the Clp substrate HEMA1 (GluTR). In terms of tissue distribution, expressed constitutively in photosynthetic tissues such as leaves, stems and flowers, and, at low levels, in siliques.

It localises to the plastid. The protein resides in the chloroplast. Functionally, clp protease adapter that facilitates CLPS1 recruitment to ClpC chaperones thus forming a binary adapter for selective substrate recognition and delivery to plastid Clp protease system (CLPC). This chain is Clp protease adapter protein ClpF, chloroplastic, found in Arabidopsis thaliana (Mouse-ear cress).